A 492-amino-acid polypeptide reads, in one-letter code: uncharacterized protein (492 aa).

12 helical membrane passes run Leu-13–Gly-33, Gly-42–Leu-62, Phe-97–Leu-117, Gly-150–Ile-170, Ile-180–Pro-200, Val-222–Ile-242, Ala-258–Gly-278, Phe-320–Val-340, Leu-359–Leu-379, Gly-391–Gly-411, Val-428–Leu-448, and Thr-463–Leu-483.

It belongs to the sodium:neurotransmitter symporter (SNF) (TC 2.A.22) family.

It is found in the cell membrane. Putative sodium-dependent transporter. This is an uncharacterized protein from Methanocaldococcus jannaschii (strain ATCC 43067 / DSM 2661 / JAL-1 / JCM 10045 / NBRC 100440) (Methanococcus jannaschii).